The following is a 747-amino-acid chain: MDFVDFDTLNLSDDLPQPQRALSLPIATNIETFGRKFYNLNSLTRNLLKRDNNTDTEKSENQPQVAEKYANLSLSLIEDTKNADNDHQEPHSDIKISALSARLSRVLNNPLSDSQIRQIFGSLEDTLRSWDSILEPGALGSMSRRKLRGEIERTLIRNQTQTLKEYQPVIKNLRKLEENVDALRSASMGVVDSVNNDFESSEIFNSKMENLHRKKTAVVVKKQLLSAFRAKFTLNEYEEYTLENGDISDEFFTVLAKAEQVDQNCSILLSIDNSQLGVKTMARVNRLVTRASEKVVAYANRTLGNLYALNNRDRVRTLHQCFVYLRHRPHYLNSVLATFVGSRSKTLVDEFLGQANSRVAGSSPQSEEYQDPVRVIGDLLAYIHSVVVSESETISGIFSFENDSVDETSRKEFGEIMNDCVAKVLQSLAKPVRAKLEQIISREVRISVLFSIHHLAELYYIMFSKQIKQDHMGLVATIESLVESAELRIVTTVENKLTTIRNSNSAQLQLNIDLQPPEWIIDFYSEILPMLDQTHTESIFKDNSLVNMVVDQPIQIYEQHMENSQVKNFEKRDKYILQLNCLDLILSKIMPISVLTDKVILVNEKIKEVSDKLVETQVSSLLEESGLTDFYNIVNMICPINDDFFDVSIYEPITENKLFTEDNIRQVNSKIQAFLPTALLDIQQSLFKINSPLVVNEIITESAIKYSRFYGRFQLICDEYLKVPLLAWSDGEVATLLGVEDAYFDEQ.

Belongs to the COG6 family.

The protein localises to the golgi apparatus membrane. Acts as a component of the peripheral membrane COG complex that is involved in intra-Golgi protein trafficking. COG is located at the cis-Golgi, and regulates tethering of retrograde intra-Golgi vesicles and possibly a number of other membrane trafficking events. The polypeptide is Conserved oligomeric Golgi complex subunit 6 (COG6) (Meyerozyma guilliermondii (strain ATCC 6260 / CBS 566 / DSM 6381 / JCM 1539 / NBRC 10279 / NRRL Y-324) (Yeast)).